Reading from the N-terminus, the 502-residue chain is Lysine--tRNA ligase (502 aa).

Residues Glu413 and Glu420 each contribute to the Mg(2+) site.

The protein belongs to the class-II aminoacyl-tRNA synthetase family. As to quaternary structure, homodimer. Requires Mg(2+) as cofactor.

It localises to the cytoplasm. It catalyses the reaction tRNA(Lys) + L-lysine + ATP = L-lysyl-tRNA(Lys) + AMP + diphosphate. In Haemophilus influenzae (strain PittGG), this protein is Lysine--tRNA ligase.